A 246-amino-acid chain; its full sequence is MKYDIIGDIHGCLQEFQNLTEKLGYNWSSGLPVHPDQRKLAFVGDITDRGPHSLRMIEIVWELVIHKKVAYYAPGNHCNKLYRFFLGRNVTIAHGLETTVAEYEALPSHKQNMIKEKFITLYEQSPLYHVLDEKRLLVCHAGIRQDYIGRQDKKVQTFVLYGDITGEKHADGSPVRRDWAKEYKGTTWIVYGHTPVKEPRFVNHTVNIDTGAVFGGKLTGLRYPEMETVSVPSSLPFVPEKFRPIS.

Belongs to the PrpE family. The cofactor is Ni(2+).

The catalysed reaction is P(1),P(4)-bis(5'-guanosyl) tetraphosphate + H2O = GMP + GTP + 2 H(+). In terms of biological role, asymmetrically hydrolyzes Ap4p to yield AMP and ATP. This Bacillus cereus (strain ZK / E33L) protein is Bis(5'-nucleosyl)-tetraphosphatase PrpE [asymmetrical].